Here is a 495-residue protein sequence, read N- to C-terminus: Ectonucleoside triphosphate diphosphohydrolase 2 (495 aa).

Topologically, residues M1 to S7 are cytoplasmic. The chain crosses the membrane as a helical span at residues L8–P28. Topologically, residues T29 to S462 are extracellular. N64 carries N-linked (GlcNAc...) asparagine glycosylation. An intrachain disulfide couples C75 to C99. N129 is a glycosylation site (N-linked (GlcNAc...) asparagine). The Proton acceptor role is filled by E165. An ATP-binding site is contributed by G204–Q208. Disulfide bonds link C242/C284, C265/C310, C323/C328, and C377/C399. Residue N294 is glycosylated (N-linked (GlcNAc...) asparagine). 2 N-linked (GlcNAc...) asparagine glycosylation sites follow: N378 and N443. A helical transmembrane segment spans residues S463–L483. The Cytoplasmic portion of the chain corresponds to R484–I495.

This sequence belongs to the GDA1/CD39 NTPase family. Requires Ca(2+) as cofactor. It depends on Mg(2+) as a cofactor. As to expression, brain, placenta, skeletal muscle, kidney, pancreas, heart, ovary, testis, colon, small intestine, prostate and pancreas. No expression in adult thymus, spleen, lung, liver and peripheral blood leukocytes.

The protein localises to the cell membrane. It is found in the endoplasmic reticulum membrane. In terms of biological role, in the nervous system, could hydrolyze ATP and other nucleotides to regulate purinergic neurotransmission. Hydrolyzes ADP only to a marginal extent. The order of activity with different substrates is ATP &gt; GTP &gt; CTP = ITP &gt; UTP &gt;&gt; ADP = UDP. The protein is Ectonucleoside triphosphate diphosphohydrolase 2 (ENTPD2) of Homo sapiens (Human).